We begin with the raw amino-acid sequence, 89 residues long: Large ribosomal subunit protein eL34 (89 aa).

Residues Met1 to Ser22 form a disordered region.

This sequence belongs to the eukaryotic ribosomal protein eL34 family.

This chain is Large ribosomal subunit protein eL34, found in Methanococcus maripaludis (strain C5 / ATCC BAA-1333).